We begin with the raw amino-acid sequence, 81 residues long: Small ribosomal subunit protein bS16 (81 aa).

This sequence belongs to the bacterial ribosomal protein bS16 family.

The polypeptide is Small ribosomal subunit protein bS16 (Caldicellulosiruptor saccharolyticus (strain ATCC 43494 / DSM 8903 / Tp8T 6331)).